The following is a 227-amino-acid chain: Cytochrome c oxidase subunit 2 (227 aa).

Over 1-14 (MAYPMQLGFQDATS) the chain is Mitochondrial intermembrane. Residues 15–45 (PIMEELLHFHDHTLMIVFLISSLVLYIISLM) traverse the membrane as a helical segment. Residues 46-59 (LTTKLTHTSTMDAQ) are Mitochondrial matrix-facing. The helical transmembrane segment at 60 to 87 (EVETIWTILPAIILILIALPSLRILYMM) threads the bilayer. Over 88-227 (DEINNPSLTV…YFEKWSASML (140 aa)) the chain is Mitochondrial intermembrane. Cu cation contacts are provided by histidine 161, cysteine 196, glutamate 198, cysteine 200, histidine 204, and methionine 207. Residue glutamate 198 coordinates Mg(2+). Tyrosine 218 carries the post-translational modification Phosphotyrosine.

It belongs to the cytochrome c oxidase subunit 2 family. Component of the cytochrome c oxidase (complex IV, CIV), a multisubunit enzyme composed of 14 subunits. The complex is composed of a catalytic core of 3 subunits MT-CO1, MT-CO2 and MT-CO3, encoded in the mitochondrial DNA, and 11 supernumerary subunits COX4I, COX5A, COX5B, COX6A, COX6B, COX6C, COX7A, COX7B, COX7C, COX8 and NDUFA4, which are encoded in the nuclear genome. The complex exists as a monomer or a dimer and forms supercomplexes (SCs) in the inner mitochondrial membrane with NADH-ubiquinone oxidoreductase (complex I, CI) and ubiquinol-cytochrome c oxidoreductase (cytochrome b-c1 complex, complex III, CIII), resulting in different assemblies (supercomplex SCI(1)III(2)IV(1) and megacomplex MCI(2)III(2)IV(2)). Found in a complex with TMEM177, COA6, COX18, COX20, SCO1 and SCO2. Interacts with TMEM177 in a COX20-dependent manner. Interacts with COX20. Interacts with COX16. It depends on Cu cation as a cofactor.

The protein resides in the mitochondrion inner membrane. It catalyses the reaction 4 Fe(II)-[cytochrome c] + O2 + 8 H(+)(in) = 4 Fe(III)-[cytochrome c] + 2 H2O + 4 H(+)(out). Component of the cytochrome c oxidase, the last enzyme in the mitochondrial electron transport chain which drives oxidative phosphorylation. The respiratory chain contains 3 multisubunit complexes succinate dehydrogenase (complex II, CII), ubiquinol-cytochrome c oxidoreductase (cytochrome b-c1 complex, complex III, CIII) and cytochrome c oxidase (complex IV, CIV), that cooperate to transfer electrons derived from NADH and succinate to molecular oxygen, creating an electrochemical gradient over the inner membrane that drives transmembrane transport and the ATP synthase. Cytochrome c oxidase is the component of the respiratory chain that catalyzes the reduction of oxygen to water. Electrons originating from reduced cytochrome c in the intermembrane space (IMS) are transferred via the dinuclear copper A center (CU(A)) of subunit 2 and heme A of subunit 1 to the active site in subunit 1, a binuclear center (BNC) formed by heme A3 and copper B (CU(B)). The BNC reduces molecular oxygen to 2 water molecules using 4 electrons from cytochrome c in the IMS and 4 protons from the mitochondrial matrix. The sequence is that of Cytochrome c oxidase subunit 2 (MT-CO2) from Boselaphus tragocamelus (Nilgai).